The primary structure comprises 335 residues: Glyceraldehyde-3-phosphate dehydrogenase (335 aa).

Residues 12-13 (RI), Asp-34, and Arg-79 each bind NAD(+). D-glyceraldehyde 3-phosphate contacts are provided by residues 150–152 (SCT), Thr-181, 210–211 (TG), and Arg-233. Residue Cys-151 is the Nucleophile of the active site. Asn-315 is an NAD(+) binding site.

Belongs to the glyceraldehyde-3-phosphate dehydrogenase family. Homotetramer.

The protein localises to the cytoplasm. It carries out the reaction D-glyceraldehyde 3-phosphate + phosphate + NAD(+) = (2R)-3-phospho-glyceroyl phosphate + NADH + H(+). It functions in the pathway carbohydrate degradation; glycolysis; pyruvate from D-glyceraldehyde 3-phosphate: step 1/5. This chain is Glyceraldehyde-3-phosphate dehydrogenase (GPD), found in Ogataea parapolymorpha (strain ATCC 26012 / BCRC 20466 / JCM 22074 / NRRL Y-7560 / DL-1) (Yeast).